Here is a 755-residue protein sequence, read N- to C-terminus: DNA ligase 1 (755 aa).

The N-terminal 44 residues, M1–F44, are a transit peptide targeting the mitochondrion. R2 is modified (N-acetylserine). Positions S47 to K60 are enriched in polar residues. Disordered regions lie at residues S47 to E79 and P97 to V127. A phosphoserine mark is found at S58 and S75. Residues S102–S114 show a composition bias toward low complexity. S119 and S123 each carry phosphoserine. The interaction with target DNA stretch occupies residues K309 to T318. Position 417 (E417) interacts with ATP. K419 (N6-AMP-lysine intermediate) is an active-site residue. R424 and R440 together coordinate ATP. E472 provides a ligand contact to Mg(2+). The interval K493 to K495 is interaction with target DNA. E571 serves as a coordination point for Mg(2+). 3 residues coordinate ATP: K576, R590, and K596.

This sequence belongs to the ATP-dependent DNA ligase family. It depends on Mg(2+) as a cofactor.

The protein resides in the mitochondrion. Its subcellular location is the nucleus. The enzyme catalyses ATP + (deoxyribonucleotide)n-3'-hydroxyl + 5'-phospho-(deoxyribonucleotide)m = (deoxyribonucleotide)n+m + AMP + diphosphate.. Functionally, DNA ligase that seals nicks in double-stranded DNA during DNA replication, DNA recombination and DNA repair. The mitochondrial form is required for mitochondrial DNA maintenance but is non-essential while the nuclear form is essential for cell viability. The polypeptide is DNA ligase 1 (CDC9) (Saccharomyces cerevisiae (strain ATCC 204508 / S288c) (Baker's yeast)).